A 143-amino-acid chain; its full sequence is ATP synthase epsilon chain (143 aa).

This sequence belongs to the ATPase epsilon chain family. In terms of assembly, F-type ATPases have 2 components, CF(1) - the catalytic core - and CF(0) - the membrane proton channel. CF(1) has five subunits: alpha(3), beta(3), gamma(1), delta(1), epsilon(1). CF(0) has three main subunits: a, b and c.

The protein resides in the cell inner membrane. In terms of biological role, produces ATP from ADP in the presence of a proton gradient across the membrane. This is ATP synthase epsilon chain from Dichelobacter nodosus (strain VCS1703A).